Here is a 195-residue protein sequence, read N- to C-terminus: L-rhamnose-binding lectin CSL3 (195 aa).

2 SUEL-type lectin domains span residues 1–95 (AISI…YSCV) and 105–195 (ICEG…YTCD).

In terms of biological role, L-rhamnose binding lectin. Has hemagglutinating activity towards rabbit erythrocytes, human type A erythrocytes, human type B erythrocytes, human type O erythrocytes and sheep erythrocytes. Hemagglutinating activity is inhibited by smooth-type lipopolysaccharide (LPS) from S.flexneri 1A, A.salmonicida and E.coli K12, but not by rough-type LPS from S.flexneri, E.coli K12 and E.coli EH100. Agglutinates E.coli K12 and B.subtilis. This chain is L-rhamnose-binding lectin CSL3, found in Oncorhynchus keta (Chum salmon).